A 144-amino-acid chain; its full sequence is uncharacterized protein (144 aa).

Residues 1-22 form the signal peptide; that stretch reads MCTDVAFFSLDCLATWLGGVCS.

This is an uncharacterized protein from Saccharomyces cerevisiae (strain ATCC 204508 / S288c) (Baker's yeast).